Reading from the N-terminus, the 80-residue chain is Exodeoxyribonuclease 7 small subunit (80 aa).

It belongs to the XseB family. In terms of assembly, heterooligomer composed of large and small subunits.

Its subcellular location is the cytoplasm. It catalyses the reaction Exonucleolytic cleavage in either 5'- to 3'- or 3'- to 5'-direction to yield nucleoside 5'-phosphates.. Bidirectionally degrades single-stranded DNA into large acid-insoluble oligonucleotides, which are then degraded further into small acid-soluble oligonucleotides. The chain is Exodeoxyribonuclease 7 small subunit from Vibrio atlanticus (strain LGP32) (Vibrio splendidus (strain Mel32)).